Reading from the N-terminus, the 321-residue chain is tRNA pseudouridine synthase B (321 aa).

Aspartate 47 acts as the Nucleophile in catalysis.

Belongs to the pseudouridine synthase TruB family. Type 1 subfamily.

The catalysed reaction is uridine(55) in tRNA = pseudouridine(55) in tRNA. Responsible for synthesis of pseudouridine from uracil-55 in the psi GC loop of transfer RNAs. This Shewanella baltica (strain OS185) protein is tRNA pseudouridine synthase B.